A 256-amino-acid chain; its full sequence is Pimeloyl-[acyl-carrier protein] methyl ester esterase (256 aa).

In terms of domain architecture, AB hydrolase-1 spans 15-242 (HLVLLHGWGL…AAHAPFISHP (228 aa)). Residues W22, 82-83 (SL), and 143-147 (FLALQ) contribute to the substrate site. The Nucleophile role is filled by S82. Residues D207 and H235 contribute to the active site. H235 is a binding site for substrate.

This sequence belongs to the AB hydrolase superfamily. Carboxylesterase BioH family. Monomer.

It is found in the cytoplasm. The enzyme catalyses 6-carboxyhexanoyl-[ACP] methyl ester + H2O = 6-carboxyhexanoyl-[ACP] + methanol + H(+). The protein operates within cofactor biosynthesis; biotin biosynthesis. The physiological role of BioH is to remove the methyl group introduced by BioC when the pimeloyl moiety is complete. It allows to synthesize pimeloyl-ACP via the fatty acid synthetic pathway through the hydrolysis of the ester bonds of pimeloyl-ACP esters. In Escherichia coli O7:K1 (strain IAI39 / ExPEC), this protein is Pimeloyl-[acyl-carrier protein] methyl ester esterase.